The chain runs to 307 residues: Protoheme IX farnesyltransferase (307 aa).

The next 9 membrane-spanning stretches (helical) occupy residues 31–51 (VTQLAVFCAIIGMFLATPGMV), 53–73 (WPVLIGGAAGIWLLAGAAFAI), 103–123 (TLVFSAILGGAGMWLLHVYAN), 125–145 (LTMWLTFATFLGYAVVYTILL), 153–173 (IVIGGLSGAMPPALGWAAVAG), 179–199 (AWFLVLIIFTWTPPHFWALAL), 223–243 (LLHILLYTLIMIAATLLPFVY), 246–266 (SGYIYLAAALALGAGFLAYAW), and 285–305 (ILYLSLLFAALLVDHYFKFVP).

It belongs to the UbiA prenyltransferase family. Protoheme IX farnesyltransferase subfamily.

The protein resides in the cell inner membrane. The catalysed reaction is heme b + (2E,6E)-farnesyl diphosphate + H2O = Fe(II)-heme o + diphosphate. It functions in the pathway porphyrin-containing compound metabolism; heme O biosynthesis; heme O from protoheme: step 1/1. Its function is as follows. Converts heme B (protoheme IX) to heme O by substitution of the vinyl group on carbon 2 of heme B porphyrin ring with a hydroxyethyl farnesyl side group. The polypeptide is Protoheme IX farnesyltransferase (Cupriavidus taiwanensis (strain DSM 17343 / BCRC 17206 / CCUG 44338 / CIP 107171 / LMG 19424 / R1) (Ralstonia taiwanensis (strain LMG 19424))).